A 382-amino-acid chain; its full sequence is D-galactonate dehydratase (382 aa).

D183 provides a ligand contact to Mg(2+). The active-site Proton donor is H185. Mg(2+)-binding residues include E209 and E235. H285 functions as the Proton acceptor in the catalytic mechanism.

This sequence belongs to the mandelate racemase/muconate lactonizing enzyme family. GalD subfamily. Mg(2+) serves as cofactor.

The enzyme catalyses D-galactonate = 2-dehydro-3-deoxy-D-galactonate + H2O. It participates in carbohydrate acid metabolism; D-galactonate degradation; D-glyceraldehyde 3-phosphate and pyruvate from D-galactonate: step 1/3. Its function is as follows. Catalyzes the dehydration of D-galactonate to 2-keto-3-deoxy-D-galactonate. The sequence is that of D-galactonate dehydratase from Escherichia coli (strain UTI89 / UPEC).